We begin with the raw amino-acid sequence, 208 residues long: FMN-dependent NADH:quinone oxidoreductase 1 (208 aa).

Belongs to the azoreductase type 1 family. In terms of assembly, homodimer. It depends on FMN as a cofactor.

The enzyme catalyses 2 a quinone + NADH + H(+) = 2 a 1,4-benzosemiquinone + NAD(+). The catalysed reaction is N,N-dimethyl-1,4-phenylenediamine + anthranilate + 2 NAD(+) = 2-(4-dimethylaminophenyl)diazenylbenzoate + 2 NADH + 2 H(+). Functionally, quinone reductase that provides resistance to thiol-specific stress caused by electrophilic quinones. In terms of biological role, also exhibits azoreductase activity. Catalyzes the reductive cleavage of the azo bond in aromatic azo compounds to the corresponding amines. The chain is FMN-dependent NADH:quinone oxidoreductase 1 from Bacillus thuringiensis subsp. konkukian (strain 97-27).